A 342-amino-acid polypeptide reads, in one-letter code: Protein-ribulosamine 3-kinase, chloroplastic (342 aa).

The transit peptide at Met-1–Met-46 directs the protein to the chloroplast. Glu-141–Ile-143 contributes to the ATP binding site. The active-site Proton acceptor is Asp-246.

This sequence belongs to the fructosamine kinase family.

Its subcellular location is the plastid. The protein localises to the chloroplast. The catalysed reaction is N(6)-D-ribulosyl-L-lysyl-[protein] + ATP = N(6)-(3-O-phospho-D-ribulosyl)-L-lysyl-[protein] + ADP + H(+). It catalyses the reaction N(6)-(D-erythrulosyl)-L-lysyl-[protein] + ATP = N(6)-(3-O-phospho-D-erythrulosyl)-L-lysyl-[protein] + ADP + H(+). In terms of biological role, initiates a process leading to the deglycation of proteins. Phosphorylates low-molecular-mass and protein-bound erythrulosamines and ribulosamines, but not fructosamines or psicosamines, on the third carbon of the sugar moiety. Protein-bound erythrulosamine 3-phosphates and ribulosamine 3-phosphates are unstable and decompose under physiological conditions. The protein is Protein-ribulosamine 3-kinase, chloroplastic of Oryza sativa subsp. japonica (Rice).